The following is a 122-amino-acid chain: MIQMQSTLDVACNSGARRVQCIKVLGGSHRRYAGIGDIIKVSVKEAIPRAKAKKGDVYNAVVVRTKKGVRRPDGSVIRFDRNAAVLLNNNLQPIGTRIFGPVTRELRNEQFMKIVSLAPEVL.

This sequence belongs to the universal ribosomal protein uL14 family. In terms of assembly, part of the 50S ribosomal subunit. Forms a cluster with proteins L3 and L19. In the 70S ribosome, L14 and L19 interact and together make contacts with the 16S rRNA in bridges B5 and B8.

Its function is as follows. Binds to 23S rRNA. Forms part of two intersubunit bridges in the 70S ribosome. This chain is Large ribosomal subunit protein uL14, found in Shewanella baltica (strain OS223).